Reading from the N-terminus, the 530-residue chain is Poly(U)-binding-splicing factor PUF60 (530 aa).

The tract at residues Met-1–Phe-487 is inhibits homodimerization. A Glycyl lysine isopeptide (Lys-Gly) (interchain with G-Cter in SUMO2) cross-link involves residue Lys-14. Thr-31 is modified (phosphothreonine). An inhibits transcriptional repression, interaction with ERCC3 and apoptosis induction region spans residues Gln-48–Ala-530. Lys-51 is covalently cross-linked (Glycyl lysine isopeptide (Lys-Gly) (interchain with G-Cter in SUMO2)). Ser-83 carries the post-translational modification Phosphoserine. 2 consecutive RRM domains span residues Cys-100–Asn-178 and Asn-197–Thr-275. Residue Ser-215 is modified to Phosphoserine. Lys-222 bears the N6-acetyllysine mark. Thr-285 carries the post-translational modification Phosphothreonine. The disordered stretch occupies residues Lys-387–Gln-408. A Glycyl lysine isopeptide (Lys-Gly) (interchain with G-Cter in SUMO2) cross-link involves residue Lys-390. Basic and acidic residues predominate over residues Glu-398–Gln-408. An N6-acetyllysine modification is found at Lys-425. A Glycyl lysine isopeptide (Lys-Gly) (interchain with G-Cter in SUMO2) cross-link involves residue Lys-429. The RRM 3; atypical domain maps to Thr-433–Gln-520.

The protein belongs to the RRM half pint family. As to quaternary structure, homodimer. Associates with the spliceosome. Found in a complex with RO60 and Y5 RNA. Found in a complex with FUBP1 and far upstream element (FUSE) DNA segment. Interacts directly with ERCC3. Interacts with CDK7 and GTF2H1. Interacts with SRSF11/P54. Interacts with ARGLU1; interaction may be involved in ARGLU1-mediated modulation of alternative splicing.

It localises to the nucleus. DNA- and RNA-binding protein, involved in several nuclear processes such as pre-mRNA splicing, apoptosis and transcription regulation. In association with FUBP1 regulates MYC transcription at the P2 promoter through the core-TFIIH basal transcription factor. Acts as a transcriptional repressor through the core-TFIIH basal transcription factor. Represses FUBP1-induced transcriptional activation but not basal transcription. Decreases ERCC3 helicase activity. Is also involved in pre-mRNA splicing. Promotes splicing of an intron with weak 3'-splice site and pyrimidine tract in a cooperative manner with U2AF2. Involved in apoptosis induction when overexpressed in HeLa cells. Modulates alternative splicing of several mRNAs. Binds to relaxed DNA of active promoter regions. Binds to the pyrimidine tract and 3'-splice site regions of pre-mRNA; binding is enhanced in presence of U2AF2. Binds to Y5 RNA in association with RO60. Binds to poly(U) RNA. This is Poly(U)-binding-splicing factor PUF60 from Bos taurus (Bovine).